We begin with the raw amino-acid sequence, 512 residues long: Glycerol kinase (512 aa).

Threonine 13 serves as a coordination point for ADP. ATP contacts are provided by threonine 13, threonine 14, and serine 15. Sn-glycerol 3-phosphate is bound at residue threonine 13. Residue arginine 17 coordinates ADP. Positions 83, 84, 135, and 252 each coordinate sn-glycerol 3-phosphate. 5 residues coordinate glycerol: arginine 83, glutamate 84, tyrosine 135, aspartate 252, and glutamine 253. 2 residues coordinate ADP: threonine 274 and glycine 318. Threonine 274, glycine 318, glutamine 322, and glycine 419 together coordinate ATP. ADP is bound by residues glycine 419 and asparagine 423.

Belongs to the FGGY kinase family.

The catalysed reaction is glycerol + ATP = sn-glycerol 3-phosphate + ADP + H(+). The protein operates within polyol metabolism; glycerol degradation via glycerol kinase pathway; sn-glycerol 3-phosphate from glycerol: step 1/1. Its activity is regulated as follows. Inhibited by fructose 1,6-bisphosphate (FBP). Its function is as follows. Key enzyme in the regulation of glycerol uptake and metabolism. Catalyzes the phosphorylation of glycerol to yield sn-glycerol 3-phosphate. In Corynebacterium kroppenstedtii (strain DSM 44385 / JCM 11950 / CIP 105744 / CCUG 35717), this protein is Glycerol kinase.